The primary structure comprises 465 residues: Siroheme synthase (465 aa).

The segment at 1-203 is precorrin-2 dehydrogenase /sirohydrochlorin ferrochelatase; the sequence is MDFLPLFHSL…GRPAEAERLL (203 aa). NAD(+) is bound by residues 22 to 23 and 43 to 44; these read EV and PQ. Ser-128 carries the post-translational modification Phosphoserine. Residues 217-465 are uroporphyrinogen-III C-methyltransferase; it reads GEVYLVGAGP…AWFEGAREDA (249 aa). Residue Pro-226 participates in S-adenosyl-L-methionine binding. The Proton acceptor role is filled by Asp-249. Lys-271 acts as the Proton donor in catalysis. Residues 302 to 304, Ile-307, 332 to 333, Met-384, and Gly-413 each bind S-adenosyl-L-methionine; these read GGD and TA.

This sequence in the N-terminal section; belongs to the precorrin-2 dehydrogenase / sirohydrochlorin ferrochelatase family. It in the C-terminal section; belongs to the precorrin methyltransferase family.

The catalysed reaction is uroporphyrinogen III + 2 S-adenosyl-L-methionine = precorrin-2 + 2 S-adenosyl-L-homocysteine + H(+). It carries out the reaction precorrin-2 + NAD(+) = sirohydrochlorin + NADH + 2 H(+). It catalyses the reaction siroheme + 2 H(+) = sirohydrochlorin + Fe(2+). It participates in cofactor biosynthesis; adenosylcobalamin biosynthesis; precorrin-2 from uroporphyrinogen III: step 1/1. Its pathway is cofactor biosynthesis; adenosylcobalamin biosynthesis; sirohydrochlorin from precorrin-2: step 1/1. It functions in the pathway porphyrin-containing compound metabolism; siroheme biosynthesis; precorrin-2 from uroporphyrinogen III: step 1/1. The protein operates within porphyrin-containing compound metabolism; siroheme biosynthesis; siroheme from sirohydrochlorin: step 1/1. It participates in porphyrin-containing compound metabolism; siroheme biosynthesis; sirohydrochlorin from precorrin-2: step 1/1. Its function is as follows. Multifunctional enzyme that catalyzes the SAM-dependent methylations of uroporphyrinogen III at position C-2 and C-7 to form precorrin-2 via precorrin-1. Then it catalyzes the NAD-dependent ring dehydrogenation of precorrin-2 to yield sirohydrochlorin. Finally, it catalyzes the ferrochelation of sirohydrochlorin to yield siroheme. This is Siroheme synthase from Pseudomonas aeruginosa (strain ATCC 15692 / DSM 22644 / CIP 104116 / JCM 14847 / LMG 12228 / 1C / PRS 101 / PAO1).